We begin with the raw amino-acid sequence, 397 residues long: Ribosomal RNA large subunit methyltransferase I (397 aa).

The PUA domain maps to 2 to 80; the sequence is SAAIYLVKGR…QDINRAFFVK (79 aa).

The protein belongs to the methyltransferase superfamily. RlmI family.

It localises to the cytoplasm. The catalysed reaction is cytidine(1962) in 23S rRNA + S-adenosyl-L-methionine = 5-methylcytidine(1962) in 23S rRNA + S-adenosyl-L-homocysteine + H(+). Its function is as follows. Specifically methylates the cytosine at position 1962 (m5C1962) of 23S rRNA. This is Ribosomal RNA large subunit methyltransferase I from Vibrio vulnificus (strain CMCP6).